Here is a 708-residue protein sequence, read N- to C-terminus: O-antigen chain terminator bifunctional methyltransferase/kinase WbdD (708 aa).

A methyltransferase region spans residues 1–210 (MTKDLNTLVS…VPRPMYLVSN (210 aa)). S-adenosyl-L-methionine is bound by residues 16-17 (YQ), Arg-36, Gly-61, 82-87 (DFQQEN), 108-111 (GRIE), and Leu-128. Residues 211–459 (HRVLINDFNQ…AKLPSAEQQR (249 aa)) form a kinase region. ATP contacts are provided by residues Pro-229, His-237, 241 to 243 (RRY), Lys-252, Glu-274, 309 to 311 (EKL), Met-358, and Asp-369. Positions 485-594 (AGSEALRGQI…EIEKIHRSRS (110 aa)) form a coiled coil. A required for membrane-binding region spans residues 601 to 669 (YRYLGLQIHL…RLYRRMNPLP (69 aa)). Residues 687–708 (VMHPELLPPEVYEIYLKLTKNK) form a required for localizing WbdA to the membrane region.

Belongs to the WbdD family. Interacts with WbdA.

The protein resides in the cell inner membrane. It carries out the reaction 3-O-phospho-alpha-D-Man-(1-&gt;2)-alpha-D-Man-(1-&gt;2)-[alpha-D-Man-(1-&gt;3)-alpha-D-Man-(1-&gt;3)-alpha-D-Man-(1-&gt;2)-alpha-D-Man-(1-&gt;2)](n)-alpha-D-Man-(1-&gt;3)-alpha-D-Man-(1-&gt;3)-alpha-D-Man-(1-&gt;3)-alpha-D-GlcNAc-di-trans,octa-cis-undecaprenyl diphosphate + S-adenosyl-L-methionine = 3-O-methylphospho-alpha-D-Man-(1-&gt;2)-alpha-D-Man-(1-&gt;2)-[alpha-D-Man-(1-&gt;3)-alpha-D-Man-(1-&gt;3)-alpha-D-Man-(1-&gt;2)-alpha-D-Man-(1-&gt;2)](n)-alpha-D-Man-(1-&gt;3)-alpha-D-Man-(1-&gt;3)-alpha-D-Man-(1-&gt;3)-alpha-D-GlcNAc-di-trans,octa-cis-undecaprenyl diphosphate + S-adenosyl-L-homocysteine. The catalysed reaction is alpha-D-Man-(1-&gt;2)-alpha-D-Man-(1-&gt;2)-[alpha-D-Man-(1-&gt;3)-alpha-D-Man-(1-&gt;3)-alpha-D-Man-(1-&gt;2)-alpha-D-Man-(1-&gt;2)](n)-alpha-D-Man-(1-&gt;3)-alpha-D-Man-(1-&gt;3)-alpha-D-Man-(1-&gt;3)-alpha-D-GlcNAc-di-trans,octa-cis-undecaprenyl diphosphate + ATP = 3-O-phospho-alpha-D-Man-(1-&gt;2)-alpha-D-Man-(1-&gt;2)-[alpha-D-Man-(1-&gt;3)-alpha-D-Man-(1-&gt;3)-alpha-D-Man-(1-&gt;2)-alpha-D-Man-(1-&gt;2)](n)-alpha-D-Man-(1-&gt;3)-alpha-D-Man-(1-&gt;3)-alpha-D-Man-(1-&gt;3)-alpha-D-GlcNAc-di-trans,octa-cis-undecaprenyl diphosphate + ADP + H(+). It functions in the pathway bacterial outer membrane biogenesis; LPS O-antigen biosynthesis. Functionally, regulates the length of the LPS O-antigen polysaccharide chain. Stops the polymerization of the chain by phosphorylating and then methylating the phosphate on the terminal sugar. This terminal modification is essential for export of the O-antigen across the inner membrane. WbdD is also required for correct localization of the WbdA mannosyltransferase. This chain is O-antigen chain terminator bifunctional methyltransferase/kinase WbdD, found in Escherichia coli.